A 461-amino-acid chain; its full sequence is Elongation factor 1-alpha, oocyte form (461 aa).

Position 2 is a n,N,N-trimethylglycine (Gly2). Positions 5-242 (KIHINIVVIG…DCIIPPQRPT (238 aa)) constitute a tr-type G domain. The tract at residues 14–21 (GHVDSGKS) is G1. 14–21 (GHVDSGKS) provides a ligand contact to GTP. The segment at 70-74 (GITID) is G2. Positions 91–94 (DAPG) are G3. Residues 91–95 (DAPGH) and 153–156 (NKMD) contribute to the GTP site. The G4 stretch occupies residues 153–156 (NKMD). The segment at 194 to 196 (SGW) is G5. Residues Glu301 and Glu374 each carry the 5-glutamyl glycerylphosphorylethanolamine modification.

Belongs to the TRAFAC class translation factor GTPase superfamily. Classic translation factor GTPase family. EF-Tu/EF-1A subfamily. Oocyte.

It localises to the cytoplasm. In terms of biological role, this protein promotes the GTP-dependent binding of aminoacyl-tRNA to the A-site of ribosomes during protein biosynthesis. This is Elongation factor 1-alpha, oocyte form (eef1ao) from Xenopus laevis (African clawed frog).